A 63-amino-acid chain; its full sequence is Large ribosomal subunit protein bL28 (63 aa).

This sequence belongs to the bacterial ribosomal protein bL28 family.

This is Large ribosomal subunit protein bL28 from Clostridium beijerinckii (strain ATCC 51743 / NCIMB 8052) (Clostridium acetobutylicum).